The chain runs to 677 residues: MTQVAKKILVTCALPYANGSIHLGHMLEHIQADVWVRYQRMRGHEVNFICADDAHGTPIMLKAQQLGITPEQMIGEMSQEHQTDFAGFNISYDNYHSTHSDENRELSELIYTRLKENGFIKNRTISQLYDPEKGMFLPDRFVKGTCPKCKSADQYGDNCEVCGATYSPTELIEPKSVVSGATPVMRDSEHFFFDLPSFSEMLQAWTRSGALQEQVANKMQEWFESGLQQWDISRDAPYFGFEIPNAPGKYFYVWLDAPIGYMGSFKNLCDKRGDTTSFDEYWKKDSDAELYHFIGKDIVYFHSLFWPAMLEGSHFRKPTNLFVHGYVTVNGAKMSKSRGTFIKASTWLKHFDADSLRYYYTAKLSSRIDDIDLNLEDFVQRVNADIVNKVVNLASRNAGFINKRFDGVLAAELADPQLYKTFTDAAAVIGEAWESREFGKAIREIMALADVANRYVDEQAPWVVAKQEGRDADLQAICSMGINLFRVLMTYLKPVLPTLSERVEAFLNSELNWDAIEQPLLSHKVNTFKALYNRIDMKQVEALVEASKEEVKAAAAPVTGPLADFPIQETITFDDFAKIDLRVALIENAEFVEGSDKLLRLTLDLGGEKRNVFSGIRSSYPDPQALIGRQTVMVANLAPRKMRFGVSEGMVMAAGPGGKDIFLLSPDDGAKPGQQVK.

The short motif at 15 to 25 (PYANGSIHLGH) is the 'HIGH' region element. Zn(2+)-binding residues include Cys146, Cys149, Cys159, and Cys162. The 'KMSKS' region signature appears at 333 to 337 (KMSKS). Lys336 lines the ATP pocket. In terms of domain architecture, tRNA-binding spans 575-677 (DFAKIDLRVA…DGAKPGQQVK (103 aa)).

Belongs to the class-I aminoacyl-tRNA synthetase family. MetG type 1 subfamily. In terms of assembly, homodimer. Zn(2+) is required as a cofactor.

It localises to the cytoplasm. The enzyme catalyses tRNA(Met) + L-methionine + ATP = L-methionyl-tRNA(Met) + AMP + diphosphate. Functionally, is required not only for elongation of protein synthesis but also for the initiation of all mRNA translation through initiator tRNA(fMet) aminoacylation. This chain is Methionine--tRNA ligase, found in Salmonella paratyphi C (strain RKS4594).